Consider the following 487-residue polypeptide: Protein nucleotidyltransferase YdiU (487 aa).

The ATP site is built by glycine 90, glycine 92, arginine 93, lysine 113, aspartate 125, glycine 126, arginine 176, and arginine 183. Residue aspartate 252 is the Proton acceptor of the active site. The Mg(2+) site is built by asparagine 253 and aspartate 262. Residue aspartate 262 participates in ATP binding.

This sequence belongs to the SELO family. Mg(2+) is required as a cofactor. The cofactor is Mn(2+).

It catalyses the reaction L-seryl-[protein] + ATP = 3-O-(5'-adenylyl)-L-seryl-[protein] + diphosphate. The catalysed reaction is L-threonyl-[protein] + ATP = 3-O-(5'-adenylyl)-L-threonyl-[protein] + diphosphate. It carries out the reaction L-tyrosyl-[protein] + ATP = O-(5'-adenylyl)-L-tyrosyl-[protein] + diphosphate. The enzyme catalyses L-histidyl-[protein] + UTP = N(tele)-(5'-uridylyl)-L-histidyl-[protein] + diphosphate. It catalyses the reaction L-seryl-[protein] + UTP = O-(5'-uridylyl)-L-seryl-[protein] + diphosphate. The catalysed reaction is L-tyrosyl-[protein] + UTP = O-(5'-uridylyl)-L-tyrosyl-[protein] + diphosphate. Nucleotidyltransferase involved in the post-translational modification of proteins. It can catalyze the addition of adenosine monophosphate (AMP) or uridine monophosphate (UMP) to a protein, resulting in modifications known as AMPylation and UMPylation. This chain is Protein nucleotidyltransferase YdiU, found in Pseudomonas fluorescens (strain SBW25).